The sequence spans 117 residues: Putative phosphotransferase enzyme IIB component MPN_268 (117 aa).

The chain crosses the membrane as a helical span at residues Met-1–Val-21. Residues Pro-42 to Arg-117 form the PTS EIIB type-1 domain.

Its subcellular location is the membrane. In terms of biological role, the phosphoenolpyruvate-dependent sugar phosphotransferase system (PTS), a major carbohydrate active -transport system, catalyzes the phosphorylation of incoming sugar substrates concomitant with their translocation across the cell membrane. This Mycoplasma pneumoniae (strain ATCC 29342 / M129 / Subtype 1) (Mycoplasmoides pneumoniae) protein is Putative phosphotransferase enzyme IIB component MPN_268.